Reading from the N-terminus, the 252-residue chain is Tricin synthase 1 (252 aa).

S-adenosyl-L-methionine contacts are provided by residues Ser-65, Glu-87, 89 to 90, Ser-95, and Asp-113; that span reads GV. Residue Asp-168 participates in a divalent metal cation binding. Asp-170 serves as a coordination point for S-adenosyl-L-methionine. Asp-194 and Asn-195 together coordinate a divalent metal cation.

This sequence belongs to the class I-like SAM-binding methyltransferase superfamily. Cation-dependent O-methyltransferase family. CCoAMT subfamily. Requires Mg(2+) as cofactor. It depends on Mn(2+) as a cofactor. Co(2+) is required as a cofactor. Ubiquitous. Highest expression in stems and roots.

It localises to the nucleus. It carries out the reaction tricetin + 2 S-adenosyl-L-methionine = 3',5'-di-O-methyltricetin + 2 S-adenosyl-L-homocysteine + 2 H(+). In terms of biological role, catalyzes the stepwise methylation of tricetin to its 3'-mono- and 3',5'-dimethyl ethers. No 3',4',5'-trimethylated ester derivatives are produced. Can use caffeoyl-CoA, 5-hydroxyferulic acid, luteolin, tricetin, quercetin, myrcetin and 7,8-dihydroxyflavone as substrates, but not naringenin, apigenin or kaempferol. The 2,3-double bond and the O-dihydroxyl group of the substrate are both required for catalytic activity of the enzyme. This is Tricin synthase 1 (ROMT-15) from Oryza sativa subsp. japonica (Rice).